A 1420-amino-acid chain; its full sequence is Transcription elongation factor spt6 (1420 aa).

Disordered stretches follow at residues 1-104, 117-167, and 1186-1208; these read MSAR…EEDL, AAAT…RPMH, and VSRP…QEAK. Composition is skewed to acidic residues over residues 11–29, 45–57, and 67–76; these read AVLD…EDYD, SSEE…DDEE, and IVDEDEEIEE. A compositionally biased stretch (basic residues) spans 125-134; it reads KRLKRGHKDH. Acidic residues predominate over residues 145–154; the sequence is FNSDEDEEAA. An SH2 domain is found at 1230–1330; it reads PLFRPFNSTQ…VDEMMLHEKY (101 aa).

Belongs to the SPT6 family.

Its subcellular location is the nucleus. The protein resides in the chromosome. In terms of biological role, histone H3-H4 chaperone that plays a role in maintenance of chromatin structure during RNA polymerase II transcription elongation thereby repressing transcription initiation from cryptic promoters. Mediates the reassembly of nucleosomes onto the promoters of at least a selected set of genes during repression; the nucleosome reassembly is essential for transcriptional repression. Essential for viability. This Aspergillus fumigatus (strain ATCC MYA-4609 / CBS 101355 / FGSC A1100 / Af293) (Neosartorya fumigata) protein is Transcription elongation factor spt6 (spt6).